The chain runs to 93 residues: UPF0358 protein ABC2396 (93 aa).

This sequence belongs to the UPF0358 family.

This chain is UPF0358 protein ABC2396, found in Shouchella clausii (strain KSM-K16) (Alkalihalobacillus clausii).